A 210-amino-acid polypeptide reads, in one-letter code: Regulatory protein RecX (210 aa).

A disordered region spans residues serine 28–lysine 47.

It belongs to the RecX family.

The protein resides in the cytoplasm. Its function is as follows. Modulates RecA activity. In Corynebacterium efficiens (strain DSM 44549 / YS-314 / AJ 12310 / JCM 11189 / NBRC 100395), this protein is Regulatory protein RecX.